A 232-amino-acid chain; its full sequence is Cysteine proteinase inhibitor 7 (232 aa).

The N-terminal stretch at 1–29 is a signal peptide; the sequence is MDMRRASMCMMLICVSLVLLSGFGQFVIC. Cystatin domains are found at residues 46 to 135 and 152 to 214; these read GGFS…KNII and FDWR…ERGN. Positions 91-95 match the Secondary area of contact motif; the sequence is QVVAG. S181 carries the post-translational modification Phosphoserine.

It belongs to the cystatin family. Phytocystatin subfamily.

The protein localises to the secreted. Functionally, specific inhibitor of cysteine proteinases. Probably involved in the regulation of endogenous processes and in defense against pests and pathogens. This Arabidopsis thaliana (Mouse-ear cress) protein is Cysteine proteinase inhibitor 7 (CYS7).